The chain runs to 407 residues: uncharacterized protein (407 aa).

Positions 1–27 are cleaved as a signal peptide; sequence MRILAMTRAHNAGRTLAATLDSLAVFS.

This is an uncharacterized protein from Mycobacterium bovis (strain ATCC BAA-935 / AF2122/97).